The sequence spans 86 residues: Large ribosomal subunit protein bL27 (86 aa).

A disordered region spans residues 1-23 (MAHKKGTGSTRNGRDSNSKRLGV).

The protein belongs to the bacterial ribosomal protein bL27 family.

The sequence is that of Large ribosomal subunit protein bL27 from Prochlorococcus marinus (strain MIT 9515).